Here is a 354-residue protein sequence, read N- to C-terminus: Guanine nucleotide-binding protein G(o) subunit alpha (354 aa).

Gly-2 carries N-myristoyl glycine lipidation. A lipid anchor (S-palmitoyl cysteine) is attached at Cys-3. Positions 32-354 (KDVKLLLLGA…ANNLRGCGLY (323 aa)) constitute a G-alpha domain. Residues 35-48 (KLLLLGAGESGKST) are G1 motif. Positions 43, 46, 47, 48, 152, 176, 177, 178, and 179 each coordinate GTP. Ser-47 contacts Mg(2+). The tract at residues 174–182 (DILRTRVKT) is G2 motif. Thr-182 is a Mg(2+) binding site. The interval 197–206 (FRLFDVGGQR) is G3 motif. Gln-205 bears the 5-glutamyl histamine mark. Residues 266-273 (ILFLNKKD) are G4 motif. 3 residues coordinate GTP: Asn-270, Asp-273, and Cys-325. Positions 324-329 (TCATDT) are G5 motif. The residue at position 346 (Asn-346) is a Deamidated asparagine; in form Alpha-3. Residue Cys-351 is the site of S-palmitoyl cysteine attachment.

It belongs to the G-alpha family. G(i/o/t/z) subfamily. As to quaternary structure, g proteins are composed of 3 units; alpha, beta and gamma. The alpha chain contains the guanine nucleotide binding site. Forms a complex with GNB1 and GNG3. Interacts with RGS14. Interacts with RGS16. Interacts with RGS19. Interacts (when palmitoylated) with ADGRG3. Post-translationally, deamidation of Asn-346 converts alpha-1 to alpha-3. In terms of processing, histaminylated at Gln-205 residues by TGM2.

The protein resides in the cell membrane. It localises to the membrane. The catalysed reaction is GTP + H2O = GDP + phosphate + H(+). The GTPase activity is promoted by GTPAse activators, such as RGS14, RGS16 and RGS19. Its function is as follows. Guanine nucleotide-binding proteins (G proteins) function as transducers downstream of G protein-coupled receptors (GPCRs) in numerous signaling cascades. The alpha chain contains the guanine nucleotide binding site and alternates between an active, GTP-bound state and an inactive, GDP-bound state. Signaling by an activated GPCR promotes GDP release and GTP binding. The alpha subunit has a low GTPase activity that converts bound GTP to GDP, thereby terminating the signal. Both GDP release and GTP hydrolysis are modulated by numerous regulatory proteins. Signaling is mediated via effector proteins, such as adenylate cyclase. Inhibits adenylate cyclase activity, leading to decreased intracellular cAMP levels. The polypeptide is Guanine nucleotide-binding protein G(o) subunit alpha (GNAO1) (Cricetulus longicaudatus (Long-tailed dwarf hamster)).